Consider the following 324-residue polypeptide: Homoserine kinase (324 aa).

87–97 (PVARGMGSSAA) provides a ligand contact to ATP.

This sequence belongs to the GHMP kinase family. Homoserine kinase subfamily.

Its subcellular location is the cytoplasm. The enzyme catalyses L-homoserine + ATP = O-phospho-L-homoserine + ADP + H(+). The protein operates within amino-acid biosynthesis; L-threonine biosynthesis; L-threonine from L-aspartate: step 4/5. Functionally, catalyzes the ATP-dependent phosphorylation of L-homoserine to L-homoserine phosphate. In Symbiobacterium thermophilum (strain DSM 24528 / JCM 14929 / IAM 14863 / T), this protein is Homoserine kinase.